Here is a 204-residue protein sequence, read N- to C-terminus: Synaptosomal-associated protein 25-A (204 aa).

Residues Met1–Leu11 show a composition bias toward basic and acidic residues. The interval Met1–Ser25 is disordered. T-SNARE coiled-coil homology domains are found at residues Asp19–Leu81 and Asp138–Met200.

The protein belongs to the SNAP-25 family. In terms of tissue distribution, expressed in several regions throughout the adult brain, including the mesencephalon.

The protein localises to the synapse. It localises to the synaptosome. It is found in the cell membrane. May play an important role in the synaptic function of specific neuronal systems. Associates with proteins involved in vesicle docking and membrane fusion. The sequence is that of Synaptosomal-associated protein 25-A from Danio rerio (Zebrafish).